Reading from the N-terminus, the 171-residue chain is CS1 fimbrial subunit A (171 aa).

The N-terminal stretch at 1–23 is a signal peptide; the sequence is MKLKKTIGAMALATLFATMGASA.

This sequence belongs to the fimbrial CS1 protein family.

The protein resides in the fimbrium. Functionally, fimbriae (also called pili), polar filaments radiating from the surface of the bacterium to a length of 0.5-1.5 micrometers and numbering 100-300 per cell, enable bacteria to colonize the epithelium of specific host organs. The sequence is that of CS1 fimbrial subunit A (csoA) from Escherichia coli.